A 188-amino-acid chain; its full sequence is Elongation factor P (188 aa).

Lysine 34 carries the N6-(3,6-diaminohexanoyl)-5-hydroxylysine modification.

It belongs to the elongation factor P family. May be beta-lysylated on the epsilon-amino group of Lys-34 by the combined action of EpmA and EpmB, and then hydroxylated on the C5 position of the same residue by EpmC (if this protein is present). Lysylation is critical for the stimulatory effect of EF-P on peptide-bond formation. The lysylation moiety may extend toward the peptidyltransferase center and stabilize the terminal 3-CCA end of the tRNA. Hydroxylation of the C5 position on Lys-34 may allow additional potential stabilizing hydrogen-bond interactions with the P-tRNA.

Its subcellular location is the cytoplasm. Its pathway is protein biosynthesis; polypeptide chain elongation. Functionally, involved in peptide bond synthesis. Alleviates ribosome stalling that occurs when 3 or more consecutive Pro residues or the sequence PPG is present in a protein, possibly by augmenting the peptidyl transferase activity of the ribosome. Modification of Lys-34 is required for alleviation. The sequence is that of Elongation factor P from Pasteurella multocida (strain Pm70).